A 121-amino-acid chain; its full sequence is Fumarate reductase subunit D (121 aa).

The next 3 membrane-spanning stretches (helical) occupy residues 22 to 42, 57 to 77, and 100 to 120; these read GVWFAMITPVTVLLMGILLPL, AFVSHPIGGAFTVLSLSLPMW, and YACYLAAALVTVLATVWVIQL.

This sequence belongs to the FrdD family. As to quaternary structure, part of an enzyme complex containing four subunits: a flavoprotein (FrdA), an iron-sulfur protein (FrdB), and two hydrophobic anchor proteins (FrdC and FrdD).

Its subcellular location is the cell inner membrane. Functionally, anchors the catalytic components of the fumarate reductase complex to the cell membrane, binds quinones. The polypeptide is Fumarate reductase subunit D (Shewanella putrefaciens (strain CN-32 / ATCC BAA-453)).